Here is an 89-residue protein sequence, read N- to C-terminus: Small ribosomal subunit protein uS14 (89 aa).

Belongs to the universal ribosomal protein uS14 family. As to quaternary structure, part of the 30S ribosomal subunit. Contacts proteins S3 and S10.

Functionally, binds 16S rRNA, required for the assembly of 30S particles and may also be responsible for determining the conformation of the 16S rRNA at the A site. This chain is Small ribosomal subunit protein uS14, found in Chlorobaculum tepidum (strain ATCC 49652 / DSM 12025 / NBRC 103806 / TLS) (Chlorobium tepidum).